Here is a 463-residue protein sequence, read N- to C-terminus: MAHSRARRRKRASATQLYQTCKASGTCPPDVIPKVEQNTLADKILKWGSLGVFFGGLGIGTGSGTGGRTGYVPVGSTPRPAISTGPTARPPIVVDTVGPTDPSIVSLVEESAIINSGVPDPLPPVHGGFEITTSQSATPAILDVSVTTQNTTSTSIFRNPVFSEPSITQSQPSIESGAHVFISPSTISPHSTEDIPLDTFIVSSSDSNPASSTPVPATVARPRLGLYSRALHQVQVTDPAFLSSPQRLITFDNPTYEGEDISLQFAHNTIHEPPDEAFMDIIRLHRPAITSRRGLVRFSRIGQRGSMYTRSGKHIGGRVHFFKDISPISAAAEEIELHPLVAAAQDHSGLFDIYAEPDPDPVAVNTSGSLSSASTPFAQSSLSSAPWGNTTVPLSLPGDIFIQPGPDITFPTAPTVTPYNPVTPALPTGPVFITASGFYLYPTWYFTRKRRKRVSLFFTDVAA.

Residues Met1–Ala12 carry the Nuclear localization signal motif. An intrachain disulfide couples Cys21 to Cys27. A Nuclear localization signal motif is present at residues Phe446–Val454.

This sequence belongs to the papillomaviridae L2 protein family. As to quaternary structure, interacts with major capsid protein L1. Interacts with E2; this interaction inhibits E2 transcriptional activity but not the DNA replication function E2. Interacts with host GADD45GIP1. Interacts with host HSPA8; this interaction is required for L2 nuclear translocation. Interacts with host importins KPNB2 and KPNB3. Forms a complex with importin alpha2-beta1 heterodimers via interaction with the importin alpha2 adapter. Interacts with host DYNLT1; this interaction is essential for virus intracellular transport during entry. Interacts (via C-terminus) with host retromer subunits VPS35 and VPS29. Highly phosphorylated.

It localises to the virion. It is found in the host nucleus. The protein resides in the host early endosome. Its subcellular location is the host Golgi apparatus. Its function is as follows. Minor protein of the capsid that localizes along the inner surface of the virion, within the central cavities beneath the L1 pentamers. Plays a role in capsid stabilization through interaction with the major capsid protein L1. Once the virion enters the host cell, L2 escorts the genomic DNA into the nucleus by promoting escape from the endosomal compartments and traffic through the host Golgi network. Mechanistically, the C-terminus of L2 possesses a cell-penetrating peptide that protudes from the host endosome, interacts with host cytoplasmic retromer cargo and thereby mediates the capsid delivery to the host trans-Golgi network. Plays a role through its interaction with host dynein in the intracellular microtubule-dependent transport of viral capsid toward the nucleus. Mediates the viral genome import into the nucleus through binding to host importins. Once within the nucleus, L2 localizes viral genomes to host PML bodies in order to activate early gene expression for establishment of infection. Later on, promotes late gene expression by interacting with the viral E2 protein and by inhibiting its transcriptional activation functions. During virion assembly, encapsidates the genome by direct interaction with the viral DNA. The polypeptide is Minor capsid protein L2 (Homo sapiens (Human)).